The sequence spans 421 residues: MDKLIITGGARLDGEIRISGAKNAALPILAATLLADGPVTVGNLPHLHDITTMIELFGRMGIEPVIDEKLAVEIDPRTIKTLVAPYELVKTMRASILVLGPMVARFGEAEVALPGGCAIGSRPVDLHIRGLEAMGAKIEVEGGYIKAKAPEGGLRGAHFFFDTVSVTGTENIMMAAALAKGRSVLQNAAREPEVVDLANFINAMGGNVQGAGTDTITIDGVERLHSASYRVMPDRIETGTYLVAAAVTGGRVKVKDTDPTILEAVLEKLKEAGADLTTGEDWIELNMHGKRPKAVNLRTAPYPAFPTDMQAQFISLNAIAEGTGAVIETIFENRFMHVYEMHRMGAHIQVEGNTAIVTGVPALKGAPVMATDLRASASLVLSALVAEGDTLIDRIYHIDRGYECIEEKLQMLGAKIRRVPG.

22-23 (KN) is a phosphoenolpyruvate binding site. Arg93 contacts UDP-N-acetyl-alpha-D-glucosamine. Catalysis depends on Cys117, which acts as the Proton donor. Cys117 is subject to 2-(S-cysteinyl)pyruvic acid O-phosphothioketal. Residues 122-126 (RPVDL), Asp308, and Ile330 contribute to the UDP-N-acetyl-alpha-D-glucosamine site.

This sequence belongs to the EPSP synthase family. MurA subfamily.

The protein resides in the cytoplasm. It carries out the reaction phosphoenolpyruvate + UDP-N-acetyl-alpha-D-glucosamine = UDP-N-acetyl-3-O-(1-carboxyvinyl)-alpha-D-glucosamine + phosphate. Its pathway is cell wall biogenesis; peptidoglycan biosynthesis. Functionally, cell wall formation. Adds enolpyruvyl to UDP-N-acetylglucosamine. This Pseudomonas putida (strain W619) protein is UDP-N-acetylglucosamine 1-carboxyvinyltransferase.